The chain runs to 89 residues: Insulin (89 aa).

3 disulfide bridges follow: Cys-7/Cys-75, Cys-19/Cys-88, and Cys-74/Cys-79. A propeptide spans 33–66 (DVGPLSAFRDLEPPLDTEMEDRFPYRQQLAGSKM) (c peptide).

This sequence belongs to the insulin family. As to quaternary structure, heterodimer of a B chain and an A chain linked by two disulfide bonds.

Its subcellular location is the secreted. Insulin decreases blood glucose concentration. It increases cell permeability to monosaccharides, amino acids and fatty acids. It accelerates glycolysis, the pentose phosphate cycle, and glycogen synthesis in liver. The sequence is that of Insulin (ins) from Callorhinchus milii (Ghost shark).